We begin with the raw amino-acid sequence, 323 residues long: MSLDRKLHVVVLMGGWANEREVSLMSGEGVAKALEKRGHTVTRIDMDRQVAAKIAEAAPDVVFNALHGVPGEDGTVQGMLDLMGVPYTHSGLATSVIAIDKELTKQQLVPRGIPMPGGRIVQSEDLYQQDPLARPYVLKPVNEGSSVGVAIVTDESNYGNPIRRDAPGPWQEFRELLAEPFIRGRELTTAVVGGQALAVTELKPKSGFYDFDAKYTDGMTEHVCPADIPPEIEALCKKYALEAHRILGCRGTSRTDYRWDDEQGDDGLFVLETNTQPGMTPLSLVPEQAAYAGMSYEDLVEAIVEAALEHFAAKTGGNDGDQG.

The ATP-grasp domain occupies 105 to 305 (KQQLVPRGIP…YEDLVEAIVE (201 aa)). ATP is bound at residue 131 to 188 (PLARPYVLKPVNEGSSVGVAIVTDESNYGNPIRRDAPGPWQEFRELLAEPFIRGRELT). Residues Asp-256, Glu-272, and Asn-274 each contribute to the Mg(2+) site.

It belongs to the D-alanine--D-alanine ligase family. The cofactor is Mg(2+). Requires Mn(2+) as cofactor.

It is found in the cytoplasm. It carries out the reaction 2 D-alanine + ATP = D-alanyl-D-alanine + ADP + phosphate + H(+). The protein operates within cell wall biogenesis; peptidoglycan biosynthesis. Cell wall formation. The sequence is that of D-alanine--D-alanine ligase from Erythrobacter litoralis (strain HTCC2594).